The sequence spans 63 residues: Large ribosomal subunit protein bL32 (63 aa).

Basic residues predominate over residues 1-18; that stretch reads MPVPKRKTSPSRRGKRRS. Positions 1-26 are disordered; it reads MPVPKRKTSPSRRGKRRSHDGLRPEN.

The protein belongs to the bacterial ribosomal protein bL32 family.

In Neorickettsia sennetsu (strain ATCC VR-367 / Miyayama) (Ehrlichia sennetsu), this protein is Large ribosomal subunit protein bL32.